Consider the following 252-residue polypeptide: Pyrroloquinoline-quinone synthase (252 aa).

The protein belongs to the PqqC family.

The catalysed reaction is 6-(2-amino-2-carboxyethyl)-7,8-dioxo-1,2,3,4,7,8-hexahydroquinoline-2,4-dicarboxylate + 3 O2 = pyrroloquinoline quinone + 2 H2O2 + 2 H2O + H(+). Its pathway is cofactor biosynthesis; pyrroloquinoline quinone biosynthesis. Functionally, ring cyclization and eight-electron oxidation of 3a-(2-amino-2-carboxyethyl)-4,5-dioxo-4,5,6,7,8,9-hexahydroquinoline-7,9-dicarboxylic-acid to PQQ. The protein is Pyrroloquinoline-quinone synthase of Acinetobacter baumannii (strain AB307-0294).